The chain runs to 152 residues: Cell division protein SepF (152 aa).

The tract at residues 21 to 56 is disordered; the sequence is EYIETEQDHPEEHEQQKDKQPAYAQKPQGKQNVVSL. Residues 26 to 40 are compositionally biased toward basic and acidic residues; it reads EQDHPEEHEQQKDKQ.

Belongs to the SepF family. In terms of assembly, homodimer. Interacts with FtsZ.

It is found in the cytoplasm. Functionally, cell division protein that is part of the divisome complex and is recruited early to the Z-ring. Probably stimulates Z-ring formation, perhaps through the cross-linking of FtsZ protofilaments. Its function overlaps with FtsA. This chain is Cell division protein SepF, found in Bacillus velezensis (strain DSM 23117 / BGSC 10A6 / LMG 26770 / FZB42) (Bacillus amyloliquefaciens subsp. plantarum).